The following is a 362-amino-acid chain: MSQNSLRLVEDKSVDKSKALEAALSQIERSFGKGSIMKLGSNENVVEIETISTGSLGLDIALGVGGLPRGRIIEIYGPESSGKTTLALQTIAEAQKKGGICAFVDAEHALDPVYARKLGVDLQNLLISQPDTGEQALEITDTLVRSGAVDVLVVDSVAALTPRAEIEGEMGDSLPGLQARLMSQALRKLTASISKSNTMVIFINQIRMKIGVMFGSPETTTGGNALKFYASVRLDIRRIGAVKEREEVIGNQTRVKVVKNKMAPPFKQVEFDIMYGEGVSKTGELVDLGVKAGIVEKSGAWFSYNSQRLGQGRENAKTFLRDNPDLAREIELSLRQNAGLIADRFLQNGGPDPDDGDAAAEM.

77–84 (GPESSGKT) serves as a coordination point for ATP.

Belongs to the RecA family.

Its subcellular location is the cytoplasm. Can catalyze the hydrolysis of ATP in the presence of single-stranded DNA, the ATP-dependent uptake of single-stranded DNA by duplex DNA, and the ATP-dependent hybridization of homologous single-stranded DNAs. It interacts with LexA causing its activation and leading to its autocatalytic cleavage. In Rhizobium leguminosarum bv. trifolii (strain WSM2304), this protein is Protein RecA.